The sequence spans 105 residues: Cyclotide vibi-E (105 aa).

Positions 1–9 (AAFALPALA) are cleaved as a signal peptide. The propeptide occupies 10–69 (SSFEKDVISFRAIQAVLEKRGLSKLEDDPVLSALAHTKTIISNPVIEEALLNGANLKAGN). The cyclopeptide (Gly-Asn) cross-link spans 70–99 (GIPCAESCVWIPCTVTALIGCGCSNKVCYN). 3 cysteine pairs are disulfide-bonded: Cys-73/Cys-90, Cys-77/Cys-92, and Cys-82/Cys-97. Positions 100-105 (SLQTKY) are excised as a propeptide.

Post-translationally, this is a cyclic peptide.

In terms of biological role, probably participates in a plant defense mechanism. Has cytotoxic activity, active against a human lymphoma cell line with an IC(50) of 3.2 uM. The protein is Cyclotide vibi-E of Viola biflora (Yellow wood violet).